Consider the following 560-residue polypeptide: MGSSGDVNWKLADHPKLPKGKTIGLIVLDGWGESDPDQYNCIHKAPTPAMDSLKDGKPDTWRLIKAHGTAVGLPSEDDMGNSEVGHNALGAGRIYAQGAKLVDLALASGKIYEDEGFKYISQSFEKGTVHLIGLLSDGGVHSRLDQVQLLLKGFAERGAKRIRVHILTDGRDVLDGSSVGFVETLEADLAALRAKGVDAQVASGGGRMYVTMDRYENDWSVVKRGWDAQVLGEAPHKFKSALEAVKTLRAEPGANDQYLPSFVIVDDNGKAVGPIVDGDAVVTFNFRADRMVMHAKALEYKDFDKFDRVRVPDIRYAGMLQYDGELKLPSRYLVSPPLIDRTSGEYLAHNGVRTFACSETVKFGHVTFFWNGNRSGYFNEKLEEYVEIPSDSGISFNVQPKMKALEIAEKARDAILSGKFDQVRVNLPNGDMVGHTGDIEATVVACEAADRAVRTILDAIEQVGGIYVVTADHGNAEDMVKRDKSGKPALDKEGNLQILTSHTLKPVPIAIGGPGLSAGVRFRQDIETPGLANVAATVMNLHGFVAPSDYETSLIEVVEK.

The residue at position 2 (G2) is an N-acetylglycine. Mn(2+) is bound by residues D29 and S82. Catalysis depends on S82, which acts as the Phosphoserine intermediate. Substrate is bound by residues H141, 171-172 (RD), R207, R214, 287-290 (RADR), and K362. Mn(2+)-binding residues include D431, H435, D472, H473, and H502.

This sequence belongs to the BPG-independent phosphoglycerate mutase family. As to quaternary structure, monomer. Mn(2+) serves as cofactor.

The protein resides in the cytoplasm. It carries out the reaction (2R)-2-phosphoglycerate = (2R)-3-phosphoglycerate. The protein operates within carbohydrate degradation; glycolysis; pyruvate from D-glyceraldehyde 3-phosphate: step 3/5. Catalyzes the interconversion of 2-phosphoglycerate (2-PGA) and 3-phosphoglycerate (3-PGA). Required for guard cell function (e.g. blue light-, abscisic acid- (ABA), and low CO(2)-regulated stomatal movements) and fertility (e.g. pollen grains production). In Arabidopsis thaliana (Mouse-ear cress), this protein is Probable 2,3-bisphosphoglycerate-independent phosphoglycerate mutase 2 (PGM2).